The following is a 325-amino-acid chain: NADH-quinone oxidoreductase subunit H (325 aa).

Transmembrane regions (helical) follow at residues 11-31 (ILLT…CGAF), 81-101 (VIFT…FAIV), 114-134 (IGIL…LFAG), 154-174 (LSYE…AGSF), 186-206 (VWNV…GVAV), 237-257 (FFVG…TLFF), 265-285 (LPPF…FILI), and 304-324 (ICLP…LWQA).

The protein belongs to the complex I subunit 1 family. In terms of assembly, NDH-1 is composed of 13 different subunits. Subunits NuoA, H, J, K, L, M, N constitute the membrane sector of the complex.

The protein localises to the cell inner membrane. The catalysed reaction is a quinone + NADH + 5 H(+)(in) = a quinol + NAD(+) + 4 H(+)(out). In terms of biological role, NDH-1 shuttles electrons from NADH, via FMN and iron-sulfur (Fe-S) centers, to quinones in the respiratory chain. The immediate electron acceptor for the enzyme in this species is believed to be ubiquinone. Couples the redox reaction to proton translocation (for every two electrons transferred, four hydrogen ions are translocated across the cytoplasmic membrane), and thus conserves the redox energy in a proton gradient. This subunit may bind ubiquinone. This is NADH-quinone oxidoreductase subunit H from Escherichia fergusonii (strain ATCC 35469 / DSM 13698 / CCUG 18766 / IAM 14443 / JCM 21226 / LMG 7866 / NBRC 102419 / NCTC 12128 / CDC 0568-73).